The primary structure comprises 201 residues: Dermatopontin (201 aa).

The N-terminal stretch at 1–18 (MDLSLLWVLLPLVTMAWG) is a signal peptide. Q19 is modified (pyrrolidone carboxylic acid). Y23 is modified (sulfotyrosine). 4 tandem repeats follow at residues 26-79 (PYQQ…ACMP), 70-75 (DRQWNY), 80-135 (TPQS…CCRY), and 125-130 (DREWQF). A 2 X 53-55 AA tandem repeats region spans residues 26-186 (PYQQYHDYSD…AVERDRQWKF (161 aa)). Disulfide bonds link C50/C77, C90/C132, C106/C133, C139/C196, and C143/C189. Residues 70 to 186 (DRQWNYACMP…AVERDRQWKF (117 aa)) form a 3 X 6 AA repeats of D-R-[EQ]-W-[NQK]-[FY] region. Sulfotyrosine is present on residues Y162, Y164, Y166, and Y167. One copy of the 3-3 repeat lies at 181 to 186 (DRQWKF). The residue at position 194 (Y194) is a Sulfotyrosine.

This sequence belongs to the dermatopontin family. Interacts with TGFB1, DCN and collagen. Post-translationally, sulfated on tyrosine residue(s). In terms of tissue distribution, expressed in fibroblasts, heart, skeletal muscle, brain and pancreas. Expressed at an intermediate level in lung and kidney, and at a low level in liver and placenta. Expressed at a lower level in fibroblasts from hypertrophic scar lesional skin and in fibroblasts from patients with systemic sclerosis than in normal skin fibroblasts.

It localises to the secreted. The protein resides in the extracellular space. The protein localises to the extracellular matrix. Functionally, seems to mediate adhesion by cell surface integrin binding. May serve as a communication link between the dermal fibroblast cell surface and its extracellular matrix environment. Enhances TGFB1 activity. Inhibits cell proliferation. Accelerates collagen fibril formation, and stabilizes collagen fibrils against low-temperature dissociation. This Homo sapiens (Human) protein is Dermatopontin (DPT).